Consider the following 528-residue polypeptide: 2-isopropylmalate synthase (528 aa).

Residues 12–279 (IRIFDTTLRD…DSSINTPRIV (268 aa)) enclose the Pyruvate carboxyltransferase domain. 4 residues coordinate Mn(2+): Asp-21, His-214, His-216, and Asn-250. The regulatory domain stretch occupies residues 401–528 (RLASMTISDV…TTEAPAPATA (128 aa)).

This sequence belongs to the alpha-IPM synthase/homocitrate synthase family. LeuA type 1 subfamily. In terms of assembly, homodimer. Mn(2+) is required as a cofactor.

The protein resides in the cytoplasm. It carries out the reaction 3-methyl-2-oxobutanoate + acetyl-CoA + H2O = (2S)-2-isopropylmalate + CoA + H(+). The protein operates within amino-acid biosynthesis; L-leucine biosynthesis; L-leucine from 3-methyl-2-oxobutanoate: step 1/4. Catalyzes the condensation of the acetyl group of acetyl-CoA with 3-methyl-2-oxobutanoate (2-ketoisovalerate) to form 3-carboxy-3-hydroxy-4-methylpentanoate (2-isopropylmalate). The protein is 2-isopropylmalate synthase of Stenotrophomonas maltophilia (strain R551-3).